The chain runs to 439 residues: MTKAPLHKSLYVQVLAAIVIGVVLGHFYPPSGEAMKPLGDGFIKLIKMIIAPVIFCTVVLGIAGMEDMKKVGKTGGLALLYFEIVSTLALIVGLVLVNVLQPGAGMNIDPRTIDTKAITAYTGPGKMTGTVEFLLNIIPVSMVDAFAKGDILQVLLISVLFGFALHRFGGRGTMVFDFIEKVSQVLFAIVGTIMKAAPIGAFGAMAFTIGKYGIGSLLSLGKLMGTFYLTCLFFIFAVLGTITRLHGFSVWKFVKYIKEELLIVLGTSSSESVLPRMLSKMENLGAKKTVVGLVIPTGYSFNLDGTAIYLTMAAVFIAQATNTPMTLMQEVTLLAVLLLTSKGAAGITGSGFIVLAASLSAVGHLPVAGLALILGIDRFMSEARALTNTIGNGVASIVVAKWSKELDEQRLHAQLNGQTAEEASAPQALPDRMESRIHH.

9 helical membrane-spanning segments follow: residues Leu-10–Pro-30, Leu-45–Met-65, Leu-77–Val-97, Ala-145–Leu-165, Val-185–Met-205, Leu-223–Thr-243, Val-290–Leu-310, Thr-332–Phe-352, and Ile-353–Ile-373. The disordered stretch occupies residues Leu-415–His-439.

Belongs to the dicarboxylate/amino acid:cation symporter (DAACS) (TC 2.A.23) family.

The protein resides in the cell inner membrane. Its function is as follows. Responsible for the transport of dicarboxylates such as succinate, fumarate, and malate from the periplasm across the membrane. This chain is C4-dicarboxylate transport protein, found in Verminephrobacter eiseniae (strain EF01-2).